The primary structure comprises 824 residues: Leucine--tRNA ligase (824 aa).

A 'HIGH' region motif is present at residues Pro42–His52. The short motif at Lys581–Ser585 is the 'KMSKS' region element. Lys584 is an ATP binding site.

It belongs to the class-I aminoacyl-tRNA synthetase family.

The protein resides in the cytoplasm. It catalyses the reaction tRNA(Leu) + L-leucine + ATP = L-leucyl-tRNA(Leu) + AMP + diphosphate. This Citrifermentans bemidjiense (strain ATCC BAA-1014 / DSM 16622 / JCM 12645 / Bem) (Geobacter bemidjiensis) protein is Leucine--tRNA ligase.